We begin with the raw amino-acid sequence, 163 residues long: uncharacterized protein (163 aa).

A run of 4 helical transmembrane segments spans residues Gly-19–Ile-39, Phe-63–Leu-83, Val-87–Ala-107, and Phe-119–Leu-139.

It belongs to the DoxX family.

It localises to the cell membrane. This is an uncharacterized protein from Mycobacterium tuberculosis (strain ATCC 25618 / H37Rv).